The following is a 329-amino-acid chain: GTPase Obg (329 aa).

The Obg domain occupies 1-159; it reads MQFIDYAEIE…RWLRLELKLL (159 aa). The OBG-type G domain occupies 160–328; that stretch reads AEVGIIGLPN…LLQIVWQLLD (169 aa). GTP contacts are provided by residues 166-173, 191-195, 213-216, 280-283, and 309-311; these read GLPNAGKS, FTTLV, DIPG, NKMD, and SGV. 2 residues coordinate Mg(2+): Ser-173 and Thr-193.

This sequence belongs to the TRAFAC class OBG-HflX-like GTPase superfamily. OBG GTPase family. In terms of assembly, monomer. It depends on Mg(2+) as a cofactor.

It is found in the cytoplasm. In terms of biological role, an essential GTPase which binds GTP, GDP and possibly (p)ppGpp with moderate affinity, with high nucleotide exchange rates and a fairly low GTP hydrolysis rate. Plays a role in control of the cell cycle, stress response, ribosome biogenesis and in those bacteria that undergo differentiation, in morphogenesis control. The sequence is that of GTPase Obg from Rippkaea orientalis (strain PCC 8801 / RF-1) (Cyanothece sp. (strain PCC 8801)).